We begin with the raw amino-acid sequence, 177 residues long: Anti-apoptotic protein NR13 (177 aa).

The BH1 motif lies at 75-94 (LETDGGLNWGRLLALVVFAG). A helical membrane pass occupies residues 86 to 106 (LLALVVFAGTLAAALAESACE). Positions 126 to 141 (EWMEEHGGWDGFCRFF) match the BH2 motif. A helical membrane pass occupies residues 156–176 (SNAIMAAAGFGIAGLAFLLVV).

Belongs to the Bcl-2 family. As to quaternary structure, interacts with BAX. As to expression, mainly expressed in neural and muscular tissues.

The protein resides in the cell membrane. Shows anti-apoptotic properties. Counteract the pro-apoptotic activity of BAX. The polypeptide is Anti-apoptotic protein NR13 (NR13) (Coturnix japonica (Japanese quail)).